We begin with the raw amino-acid sequence, 1441 residues long: MIRMLVLIVVTAASPVYQRCFQDGAIVKQNPSKEAVTEVCLKDDVSMIKTEARYVKNATGVFSNNVAIRKWLVSDWHDCRPKKIVGGHINVIEVGDDLSLHTESYVCSADCTIGVDKETAQVRLQTDTTNHFEIAGTTVKSGWFKSTTYITLDQTCEHLKVSCAPKSVQFHACFNQHMSCVRFLHRTILPGSIANSICQNIEIIILVTLTLLIFILLSILSKTYICYLLMPIFIPIAYMYGVIYNKSCKKCKLCGLVYHPFTECGTHCVCGARYDTSDRMKLHRASGLCPGYKSLRAARVMCKSKGPASILSIITAVLVLTFVTPINSMVLGESKETFELEELPDDMLEMALRINSYYFTCILNYAVSWGLIIAGLLVGLIFKKYQHRFLNIYAMYCEECNMYHDKSGLKRHGDFTNKCRQCTCGQYEDATGLITHRKTYNCLVQYKAKWMMNFLIIYIFLILIKDSAIVGQATGTDFTTCLETESINWNCTGPFLNLGNCQKQQKKEPYTNIATQLKGLKAISVLDIPIITSIPDDIAGALRYIEEKEDFHVQLTTEYAMLSKYCDYYTQFSDNSGYSQTTWRVYLRSHDFEACILYPNQHFCKCVKNGEKCSSSNWDFANGMKNYYSGKQAKFDKDLNLALTALHHAFRGTSSAYIAAMLSKKSNDDLIAYTNKIKAKFPGNALLKAIIDYIAYMKGLPEMANFKYDEFWDELLYKPNPAKASNLARGKESSYNFKLAISSKSIKTCKNVKDVACLSPRSGAIYSSIIACGEPNGPSVYRKPSGGVFQSSTDRSIYCLLDSHCLEEFEAISQEELDAVKKSKCWEIEYPDVRPLQESDGAKSCRMKDSGNCNVATNRWPVMQCENDKFYYSELQKDYDKTQDIGHYCLSPGCTTIRYPINPKHISNCNWQVSRSSIAKIDVHNVEDIEQYKKAITQKLQTSLSLFKYAKTKNLPHIRPIYKYITMKETETAEGIESAYIESEVPALAGTSVGFKINSKEGKHLLDVIAYVKSASYSSVYAKLYSTGPTSGINTKHDELCTGPCPANINHQVGWLTFARERTSSWGCEEFGCLAVSDGCVFGSCQDIIKEELSVYRKETEEVTNVELCLTFSDKTYCTNLNPVTPIITDLFEVQFKTVETYSLPRIVAVQNHEIKIGQINDLGVYSKGCGNVQKVNGTVYGNGVPRFDYLCHLASRKEVIVRKCFDNDYQACKFLQSPASYRLEEDSGTVTIIDYKKILGTIKMKAILGDVKYKTFADSVDITAEGSCAGCINCFQNIHCELTLHTTIEASCPIKSSCTVFHDRILVTPNEHKYALKIVCTEKPGNTLTIKVCNTRIEASMALVDAKPIIELAPVDQTAYIREKDERCKTWMCRVRDEGLQVILEPFKNLFGSYIGIFYTFIISIIALLVIIYVLLPICFKLRDTLRKHDDAYKREMKIR.

The signal sequence occupies residues 1–13; it reads MIRMLVLIVVTAA. Over 14 to 200 the chain is Lumenal; that stretch reads SPVYQRCFQD…GSIANSICQN (187 aa). The N-linked (GlcNAc...) asparagine; by host glycan is linked to Asn57. Residues 201 to 221 traverse the membrane as a helical segment; it reads IEIIILVTLTLLIFILLSILS. Over 222–305 the chain is Cytoplasmic; it reads KTYICYLLMP…RAARVMCKSK (84 aa). The helical transmembrane segment at 306-326 threads the bilayer; that stretch reads GPASILSIITAVLVLTFVTPI. The Lumenal segment spans residues 327–365; sequence NSMVLGESKETFELEELPDDMLEMALRINSYYFTCILNY. The chain crosses the membrane as a helical span at residues 366 to 386; it reads AVSWGLIIAGLLVGLIFKKYQ. Residues 387 to 452 are Cytoplasmic-facing; the sequence is HRFLNIYAMY…LVQYKAKWMM (66 aa). A helical membrane pass occupies residues 453–473; sequence NFLIIYIFLILIKDSAIVGQA. Residues 474–1395 are Lumenal-facing; sequence TGTDFTTCLE…EPFKNLFGSY (922 aa). N-linked (GlcNAc...) asparagine; by host glycosylation is found at Asn490 and Asn1177. A helical membrane pass occupies residues 1396 to 1416; the sequence is IGIFYTFIISIIALLVIIYVL. Over 1417–1441 the chain is Cytoplasmic; that stretch reads LPICFKLRDTLRKHDDAYKREMKIR.

Belongs to the orthobunyavirus envelope glycoprotein family. Glycoprotein C and Glycoprotein N interact with each other. Specific enzymatic cleavages in vivo yield mature proteins including nonstructural protein NSm, glycoprotein C, and glycoprotein N.

Its subcellular location is the virion membrane. It localises to the host Golgi apparatus membrane. The protein resides in the host endoplasmic reticulum membrane. Its function is as follows. Glycoprotein C and Glycoprotein N interact with each other and are present at the surface of the virion. They are able to attach the virion to a cell receptor and to promote fusion of membranes after endocytosis of the virion. This chain is Envelopment polyprotein (GP), found in Bunyavirus La Crosse.